A 250-amino-acid polypeptide reads, in one-letter code: Small ribosomal subunit protein uS5 (250 aa).

Positions 1–22 (MNVVETSSEMNSNVEKASTPKQ) are enriched in polar residues. A disordered region spans residues 1–40 (MNVVETSSEMNSNVEKASTPKQENNKRFERKSRPSSRQKV). Positions 45–108 (FEEKVVTIRR…KEAKKNLVSV (64 aa)) constitute an S5 DRBM domain.

Belongs to the universal ribosomal protein uS5 family. As to quaternary structure, part of the 30S ribosomal subunit. Contacts proteins S4 and S8.

In terms of biological role, with S4 and S12 plays an important role in translational accuracy. Its function is as follows. Located at the back of the 30S subunit body where it stabilizes the conformation of the head with respect to the body. The polypeptide is Small ribosomal subunit protein uS5 (Mycoplasma capricolum subsp. capricolum (strain California kid / ATCC 27343 / NCTC 10154)).